A 148-amino-acid chain; its full sequence is Deoxyuridine 5'-triphosphate nucleotidohydrolase (148 aa).

Substrate is bound by residues 68 to 70, asparagine 81, and 85 to 87; these read RSG and TID.

This sequence belongs to the dUTPase family. Mg(2+) is required as a cofactor.

It catalyses the reaction dUTP + H2O = dUMP + diphosphate + H(+). It participates in pyrimidine metabolism; dUMP biosynthesis; dUMP from dCTP (dUTP route): step 2/2. Its function is as follows. This enzyme is involved in nucleotide metabolism: it produces dUMP, the immediate precursor of thymidine nucleotides and it decreases the intracellular concentration of dUTP so that uracil cannot be incorporated into DNA. The chain is Deoxyuridine 5'-triphosphate nucleotidohydrolase from Geobacter metallireducens (strain ATCC 53774 / DSM 7210 / GS-15).